Here is a 775-residue protein sequence, read N- to C-terminus: MEPKPFFLCIIFLLFCSSSSEILQKQTYIVQLHPNSETAKTFASKFDWHLSFLQEAVLGVEEEEEEPSSRLLYSYGSAIEGFAAQLTESEAEILRYSPEVVAVRPDHVLQVQTTYSYKFLGLDGFGNSGVWSKSRFGQGTIIGVLDTGVWPESPSFDDTGMPSIPRKWKGICQEGESFSSSSCNRKLIGARFFIRGHRVANSPEESPNMPREYISARDSTGHGTHTASTVGGSSVSMANVLGNGAGVARGMAPGAHIAVYKVCWFNGCYSSDILAAIDVAIQDKVDVLSLSLGGFPIPLYDDTIAIGTFRAMERGISVICAAGNNGPIESSVANTAPWVSTIGAGTLDRRFPAVVRLANGKLLYGESLYPGKGIKNAGREVEVIYVTGGDKGSEFCLRGSLPREEIRGKMVICDRGVNGRSEKGEAVKEAGGVAMILANTEINQEEDSIDVHLLPATLIGYTESVLLKAYVNATVKPKARIIFGGTVIGRSRAPEVAQFSARGPSLANPSILKPDMIAPGVNIIAAWPQNLGPTGLPYDSRRVNFTVMSGTSMSCPHVSGITALIRSAYPNWSPAAIKSALMTTADLYDRQGKAIKDGNKPAGVFAIGAGHVNPQKAINPGLVYNIQPVDYITYLCTLGFTRSDILAITHKNVSCNGILRKNPGFSLNYPSIAVIFKRGKTTEMITRRVTNVGSPNSIYSVNVKAPEGIKVIVNPKRLVFKHVDQTLSYRVWFVLKKKNRGGKVASFAQGQLTWVNSHNLMQRVRSPISVTLKTN.

The first 20 residues, 1-20, serve as a signal peptide directing secretion; sequence MEPKPFFLCIIFLLFCSSSS. In terms of domain architecture, Inhibitor I9 spans 27 to 111; sequence TYIVQLHPNS…AVRPDHVLQV (85 aa). The region spanning 116–618 is the Peptidase S8 domain; the sequence is SYKFLGLDGF…AGHVNPQKAI (503 aa). Active-site charge relay system residues include Asp-146 and His-222. Residues 388 to 470 form the PA domain; that stretch reads GGDKGSEFCL…YTESVLLKAY (83 aa). Asn-472 and Asn-544 each carry an N-linked (GlcNAc...) asparagine glycan. Ser-552 acts as the Charge relay system in catalysis. Asn-652 carries N-linked (GlcNAc...) asparagine glycosylation.

Belongs to the peptidase S8 family. As to expression, mostly expressed in leaves and cotyledons (especially in epidermal cells), and, to a lower extent, in floral buds, stems, and siliques. Strongly expressed in stomatal precursor cells (meristemoids and guard mother cells).

It is found in the secreted. The protein resides in the extracellular space. Its subcellular location is the apoplast. It localises to the cell membrane. Serine protease involved in the negative regulation of stomatal density and distribution. Not active on EPFL6 (AC Q1PEY6). Positive regulator of water use efficiency (WUE). In Arabidopsis thaliana (Mouse-ear cress), this protein is Subtilisin-like protease SBT1.2.